A 930-amino-acid chain; its full sequence is A disintegrin and metalloproteinase with thrombospondin motifs 5 (930 aa).

The N-terminal stretch at 1–21 (MRLEWAPLLLLLLLLSASCLS) is a signal peptide. Positions 22-261 (LAADSPAAAP…PQTWWRRRRR (240 aa)) are excised as a propeptide. Over residues 31–53 (PAQDKTRQPQAAAAAAEPDQPQG) the composition is skewed to low complexity. Disordered regions lie at residues 31–68 (PAQD…LAGQ) and 207–231 (ASCE…SRRR). The Cysteine switch signature appears at 207–214 (ASCETPAS). Cys-209 provides a ligand contact to Zn(2+). Residues 211 to 225 (TPASPSGPQESPSVH) show a composition bias toward polar residues. The Peptidase M12B domain maps to 267–476 (RQVELLLVAD…GHGNCLLDLP (210 aa)). Intrachain disulfides connect Cys-342-Cys-394, Cys-371-Cys-376, Cys-388-Cys-471, Cys-426-Cys-455, Cys-497-Cys-519, Cys-508-Cys-529, Cys-514-Cys-548, and Cys-542-Cys-553. His-410 contributes to the Zn(2+) binding site. The active site involves Glu-411. Zn(2+)-binding residues include His-414 and His-420. A Disintegrin domain is found at 485–566 (ELPGQTYDAT…TKKKYYSTSS (82 aa)). Residue Asn-498 is glycosylated (N-linked (GlcNAc...) asparagine). The region spanning 567 to 622 (HGNWGSWGPWGQCSRSCGGGVQFAYRHCNNPAPRNSGRYCTGKRAIYRSCSVTPCP) is the TSP type-1 1 domain. 2 C-linked (Man) tryptophan glycosylation sites follow: Trp-570 and Trp-573. Intrachain disulfides connect Cys-579–Cys-616, Cys-583–Cys-621, and Cys-594–Cys-606. An O-linked (Fuc...) serine glycan is attached at Ser-582. Asn-728, Asn-802, and Asn-807 each carry an N-linked (GlcNAc...) asparagine glycan. The spacer stretch occupies residues 732-874 (TKIIGTFNKK…HGSNKVGPHS (143 aa)). The region spanning 875-929 (TQLQWVTGPWLACSRTCDTGWHTRTVQCQDGNRKLAKGCLLSQRPSAFKQCLLKK) is the TSP type-1 2 domain.

Requires Zn(2+) as cofactor. Post-translationally, the precursor is cleaved by furin and PCSK7 outside of the cell. In terms of processing, glycosylated. Can be O-fucosylated by POFUT2 on a serine or a threonine residue found within the consensus sequence C1-X(2)-(S/T)-C2-G of the TSP type-1 repeat domains where C1 and C2 are the first and second cysteine residue of the repeat, respectively. Fucosylated repeats can then be further glycosylated by the addition of a beta-1,3-glucose residue by the glucosyltransferase, B3GALTL. Fucosylation mediates the efficient secretion of ADAMTS family members. Can also be C-glycosylated with one or two mannose molecules on tryptophan residues within the consensus sequence W-X-X-W of the TPRs, and N-glycosylated. These other glycosylations can also facilitate secretion. In terms of tissue distribution, expressed in skeletal muscle.

The protein resides in the secreted. It is found in the extracellular space. It localises to the extracellular matrix. Its function is as follows. Metalloproteinase that plays an important role in connective tissue organization, development, inflammation and cell migration. Extracellular matrix (ECM) degrading enzyme that shows proteolytic activity toward the hyalectan group of chondroitin sulfate proteoglycans (CSPGs) including ACAN, VCAN, BCAN and NCAN. Cleavage within the hyalectans occurs at Glu-Xaa recognition motifs. Plays a role in embryonic development, including limb and cardiac morphogenesis, and skeletal muscle development through its VCAN remodeling properties. Cleaves VCAN in the pericellular matrix surrounding myoblasts, facilitating myoblast contact and fusion which is required for skeletal muscle development and regeneration. Participates in the development of brown adipose tissue and browning of white adipose tissue. Plays an important role for T-lymphocyte migration from draining lymph nodes following viral infection. The protein is A disintegrin and metalloproteinase with thrombospondin motifs 5 (Adamts5) of Mus musculus (Mouse).